The following is a 556-amino-acid chain: Cholesterol oxidase (556 aa).

5 residues coordinate FAD: G18, E37, G88, A93, and V235. H471 (proton acceptor) is an active-site residue. G504 is an FAD binding site.

This sequence belongs to the GMC oxidoreductase family. FAD serves as cofactor.

It catalyses the reaction cholesterol + O2 = cholest-5-en-3-one + H2O2. It carries out the reaction cholest-5-en-3-one = cholest-4-en-3-one. It participates in steroid metabolism; cholesterol degradation. Functionally, bifunctional enzyme that catalyzes the oxidation and isomerization of cholesterol to cholestenone (cholest-4-en-3-one), an initial step in the cholesterol degradation process. The polypeptide is Cholesterol oxidase (Acinetobacter baumannii).